We begin with the raw amino-acid sequence, 689 residues long: ATP-dependent zinc metalloprotease FtsH 2 (689 aa).

The Cytoplasmic portion of the chain corresponds to 1 to 3 (MRK). A helical membrane pass occupies residues 4–24 (FFRGASFYILAFIIILFIVQN). Topologically, residues 25–111 (FGRPTQEIDE…SAAPPPTTPW (87 aa)) are extracellular. A helical membrane pass occupies residues 112-132 (FIELLPSIFMVLIFIVFWFVF). Topologically, residues 133–689 (MQQSQGGGNR…QDNEENRKEE (557 aa)) are cytoplasmic. 205–212 (GPPGTGKT) is an ATP binding site. Residue His-427 participates in Zn(2+) binding. Glu-428 is an active-site residue. Zn(2+) is bound by residues His-431 and Asp-503. Residues 661 to 673 (EELIEVSSDKEEE) are compositionally biased toward basic and acidic residues. A disordered region spans residues 661 to 689 (EELIEVSSDKEEEKDNQDDQDNEENRKEE).

The protein in the central section; belongs to the AAA ATPase family. In the C-terminal section; belongs to the peptidase M41 family. In terms of assembly, homohexamer. Zn(2+) is required as a cofactor.

It is found in the cell membrane. Its function is as follows. Acts as a processive, ATP-dependent zinc metallopeptidase for both cytoplasmic and membrane proteins. Plays a role in the quality control of integral membrane proteins. This Alkaliphilus metalliredigens (strain QYMF) protein is ATP-dependent zinc metalloprotease FtsH 2.